We begin with the raw amino-acid sequence, 501 residues long: Glycerol kinase (501 aa).

Thr17 provides a ligand contact to ADP. 3 residues coordinate ATP: Thr17, Thr18, and Ser19. Thr17 provides a ligand contact to sn-glycerol 3-phosphate. Arg21 is an ADP binding site. The sn-glycerol 3-phosphate site is built by Arg87, Glu88, Tyr139, and Asp243. The glycerol site is built by Arg87, Glu88, Tyr139, Asp243, and Gln244. Residues Thr265 and Gly308 each coordinate ADP. ATP is bound by residues Thr265, Gly308, Gln312, and Gly409. ADP is bound by residues Gly409 and Asn413.

This sequence belongs to the FGGY kinase family.

It catalyses the reaction glycerol + ATP = sn-glycerol 3-phosphate + ADP + H(+). The protein operates within polyol metabolism; glycerol degradation via glycerol kinase pathway; sn-glycerol 3-phosphate from glycerol: step 1/1. Inhibited by fructose 1,6-bisphosphate (FBP). Functionally, key enzyme in the regulation of glycerol uptake and metabolism. Catalyzes the phosphorylation of glycerol to yield sn-glycerol 3-phosphate. This is Glycerol kinase from Pseudomonas savastanoi pv. phaseolicola (strain 1448A / Race 6) (Pseudomonas syringae pv. phaseolicola (strain 1448A / Race 6)).